Consider the following 1152-residue polypeptide: Receptor-type guanylate cyclase gcy-8 (1152 aa).

The first 21 residues, 1–21, serve as a signal peptide directing secretion; that stretch reads MRTKKAFLLLTFNVLIYLAAC. Topologically, residues 22 to 506 are extracellular; sequence QETERILANN…GYRNERCDYT (485 aa). 4 N-linked (GlcNAc...) asparagine glycosylation sites follow: Asn31, Asn55, Asn385, and Asn465. The chain crosses the membrane as a helical span at residues 507 to 527; the sequence is LIIIGAALILLFIVAAVSAFF. The Cytoplasmic segment spans residues 528–1152; that stretch reads AQKILEKRAL…NLKNPTGLQR (625 aa). A Protein kinase domain is found at 567–857; sequence RTKMSNMNYG…RIKLNVETYL (291 aa). Residues 573-581 and Lys593 contribute to the ATP site; that span reads MNYGSRNHA. Residues 861–899 adopt a coiled-coil conformation; that stretch reads GSLVDQMTRMMEQYANNLEKLVAERTGMLEEANQRADRL. One can recognise a Guanylate cyclase domain in the interval 927–1057; the sequence is TVLFSDIVGF…DTVNMASRME (131 aa). Residues Asp932, Ile933, and Asp976 each coordinate Mg(2+).

Belongs to the adenylyl cyclase class-4/guanylyl cyclase family. In terms of tissue distribution, expressed bilaterally in AFD sensory neurons.

The protein localises to the cell membrane. Its subcellular location is the cell projection. The protein resides in the cilium. The enzyme catalyses GTP = 3',5'-cyclic GMP + diphosphate. With respect to regulation, inhibited by chloride with an IC(50) of 60 mM. Its function is as follows. Guanylate cyclase involved in the production of the second messenger cGMP. Regulates thermotaxis responses in AFD sensory neurons. May regulate AFD neuronal activity such as calcium responses to temperature gradients. Maintains the microvilli receptive ending morphology of the AFD thermosensory neurons by regulating cGMP levels downstream of kcc-3. cGMP levels antagonize the actin cytoskeleton regulator wsp-1. The protein is Receptor-type guanylate cyclase gcy-8 of Caenorhabditis elegans.